A 444-amino-acid polypeptide reads, in one-letter code: Protein CLP1 homolog (444 aa).

ATP contacts are provided by residues Glu33, Lys72, and 140–145 (DSGKST).

It belongs to the Clp1 family. Clp1 subfamily. Interacts with PCFS4 and SYM5. Forms a complex with cleavage and polyadenylation specificity factor (CPSF) subunits CPSF30, CPSF100, PCFS1, PCFS4, PCFS5, CPSF160 and FY.

The protein resides in the nucleus. Required for endonucleolytic cleavage during polyadenylation-dependent pre-mRNA 3'-end formation. Functions in gametophyte, embryo and postembryotic development. This is Protein CLP1 homolog (CLPS3) from Arabidopsis thaliana (Mouse-ear cress).